A 180-amino-acid polypeptide reads, in one-letter code: Large ribosomal subunit protein uL5c (180 aa).

The protein belongs to the universal ribosomal protein uL5 family. As to quaternary structure, part of the 50S ribosomal subunit; contacts the 5S rRNA.

It is found in the plastid. The protein localises to the chloroplast. Its function is as follows. Binds 5S rRNA, forms part of the central protuberance of the 50S subunit. The polypeptide is Large ribosomal subunit protein uL5c (rpl5) (Oltmannsiellopsis viridis (Marine flagellate)).